Reading from the N-terminus, the 213-residue chain is Orotate phosphoribosyltransferase (213 aa).

Lysine 26 contacts 5-phospho-alpha-D-ribose 1-diphosphate. 34–35 serves as a coordination point for orotate; the sequence is FF. Residues 72–73, arginine 99, lysine 100, lysine 103, histidine 105, and 124–132 contribute to the 5-phospho-alpha-D-ribose 1-diphosphate site; these read YK and DDVITAGTA. Orotate is bound by residues threonine 128 and arginine 156.

This sequence belongs to the purine/pyrimidine phosphoribosyltransferase family. PyrE subfamily. Homodimer. It depends on Mg(2+) as a cofactor.

The enzyme catalyses orotidine 5'-phosphate + diphosphate = orotate + 5-phospho-alpha-D-ribose 1-diphosphate. Its pathway is pyrimidine metabolism; UMP biosynthesis via de novo pathway; UMP from orotate: step 1/2. Catalyzes the transfer of a ribosyl phosphate group from 5-phosphoribose 1-diphosphate to orotate, leading to the formation of orotidine monophosphate (OMP). The sequence is that of Orotate phosphoribosyltransferase from Erwinia tasmaniensis (strain DSM 17950 / CFBP 7177 / CIP 109463 / NCPPB 4357 / Et1/99).